The sequence spans 274 residues: 2,3,4,5-tetrahydropyridine-2,6-dicarboxylate N-succinyltransferase (274 aa).

Residues Arg104 and Asp141 each contribute to the substrate site.

It belongs to the transferase hexapeptide repeat family. Homotrimer.

The protein localises to the cytoplasm. It catalyses the reaction (S)-2,3,4,5-tetrahydrodipicolinate + succinyl-CoA + H2O = (S)-2-succinylamino-6-oxoheptanedioate + CoA. The protein operates within amino-acid biosynthesis; L-lysine biosynthesis via DAP pathway; LL-2,6-diaminopimelate from (S)-tetrahydrodipicolinate (succinylase route): step 1/3. This chain is 2,3,4,5-tetrahydropyridine-2,6-dicarboxylate N-succinyltransferase, found in Buchnera aphidicola subsp. Acyrthosiphon pisum (strain APS) (Acyrthosiphon pisum symbiotic bacterium).